Consider the following 430-residue polypeptide: Adenylosuccinate synthetase (430 aa).

Residues 12 to 18 (GDEGKGK) and 40 to 42 (GHT) contribute to the GTP site. Residue aspartate 13 is the Proton acceptor of the active site. Mg(2+) contacts are provided by aspartate 13 and glycine 40. IMP-binding positions include 13 to 16 (DEGK), 38 to 41 (NAGH), threonine 129, arginine 143, glutamine 224, threonine 239, and arginine 303. Histidine 41 functions as the Proton donor in the catalytic mechanism. 299-305 (TVSNRER) is a binding site for substrate. GTP contacts are provided by residues arginine 305, 331–333 (KLD), and 413–415 (STG).

It belongs to the adenylosuccinate synthetase family. Homodimer. Mg(2+) serves as cofactor.

Its subcellular location is the cytoplasm. It carries out the reaction IMP + L-aspartate + GTP = N(6)-(1,2-dicarboxyethyl)-AMP + GDP + phosphate + 2 H(+). The protein operates within purine metabolism; AMP biosynthesis via de novo pathway; AMP from IMP: step 1/2. Functionally, plays an important role in the de novo pathway of purine nucleotide biosynthesis. Catalyzes the first committed step in the biosynthesis of AMP from IMP. This is Adenylosuccinate synthetase from Ehrlichia ruminantium (strain Welgevonden).